The following is a 338-amino-acid chain: Replication factor C small subunit (338 aa).

53-60 (GPPGVGKT) contacts ATP.

It belongs to the activator 1 small subunits family. RfcS subfamily. As to quaternary structure, heteromultimer composed of small subunits (RfcS) and large subunits (RfcL).

In terms of biological role, part of the RFC clamp loader complex which loads the PCNA sliding clamp onto DNA. The chain is Replication factor C small subunit from Methanosarcina acetivorans (strain ATCC 35395 / DSM 2834 / JCM 12185 / C2A).